The chain runs to 309 residues: Tagatose-6-phosphate kinase (309 aa).

It belongs to the carbohydrate kinase PfkB family. LacC subfamily.

It catalyses the reaction D-tagatofuranose 6-phosphate + ATP = D-tagatofuranose 1,6-bisphosphate + ADP + H(+). The protein operates within carbohydrate metabolism; D-tagatose 6-phosphate degradation; D-glyceraldehyde 3-phosphate and glycerone phosphate from D-tagatose 6-phosphate: step 1/2. The sequence is that of Tagatose-6-phosphate kinase from Streptococcus pneumoniae serotype 4 (strain ATCC BAA-334 / TIGR4).